A 642-amino-acid polypeptide reads, in one-letter code: 1-deoxy-D-xylulose-5-phosphate synthase 2 (642 aa).

Residues H73 and 113-115 contribute to the thiamine diphosphate site; that span reads SHA. D144 provides a ligand contact to Mg(2+). Residues 145 to 146, N174, Y285, and E366 contribute to the thiamine diphosphate site; that span reads GA. N174 contributes to the Mg(2+) binding site.

Belongs to the transketolase family. DXPS subfamily. Homodimer. The cofactor is Mg(2+). Thiamine diphosphate serves as cofactor.

It carries out the reaction D-glyceraldehyde 3-phosphate + pyruvate + H(+) = 1-deoxy-D-xylulose 5-phosphate + CO2. It functions in the pathway metabolic intermediate biosynthesis; 1-deoxy-D-xylulose 5-phosphate biosynthesis; 1-deoxy-D-xylulose 5-phosphate from D-glyceraldehyde 3-phosphate and pyruvate: step 1/1. Its function is as follows. Catalyzes the acyloin condensation reaction between C atoms 2 and 3 of pyruvate and glyceraldehyde 3-phosphate to yield 1-deoxy-D-xylulose-5-phosphate (DXP). This chain is 1-deoxy-D-xylulose-5-phosphate synthase 2, found in Streptomyces avermitilis (strain ATCC 31267 / DSM 46492 / JCM 5070 / NBRC 14893 / NCIMB 12804 / NRRL 8165 / MA-4680).